Here is a 483-residue protein sequence, read N- to C-terminus: NADPH:adrenodoxin oxidoreductase, mitochondrial (483 aa).

Residues 1-14 constitute a mitochondrion transit peptide; sequence MSRYLARYMVSRYF. 4 residues coordinate FAD: Ala-32, Asp-53, Leu-61, and Leu-97. Residues 169–172, 213–214, and Glu-225 each bind NADP(+); these read QGNV and RR. Residues Trp-391 and 398–400 each bind FAD; that span reads GII. NADP(+) is bound at residue Gly-398.

It belongs to the ferredoxin--NADP reductase type 1 family. FAD serves as cofactor.

The protein resides in the mitochondrion. The catalysed reaction is 2 reduced [adrenodoxin] + NADP(+) + H(+) = 2 oxidized [adrenodoxin] + NADPH. In terms of biological role, associates in vitro with the adrenodoxin-like protein MFDX1 to form an efficient low potential electron transfer chain that is able to reduce cytochrome C. Functions as accessory mitochondrial protein involved with BIO2 in the plant biotin synthase reaction. This chain is NADPH:adrenodoxin oxidoreductase, mitochondrial, found in Arabidopsis thaliana (Mouse-ear cress).